The sequence spans 204 residues: General odorant-binding protein 67 (204 aa).

The N-terminal stretch at Met-1–Ala-22 is a signal peptide. 3 cysteine pairs are disulfide-bonded: Cys-57/Cys-85, Cys-81/Cys-147, and Cys-128/Cys-157.

Belongs to the PBP/GOBP family.

It is found in the secreted. Present in the aqueous fluid surrounding olfactory sensory dendrites and are thought to aid in the capture and transport of hydrophobic odorants into and through this fluid. The chain is General odorant-binding protein 67 (Obp67) from Anopheles gambiae (African malaria mosquito).